The following is a 69-amino-acid chain: Large ribosomal subunit protein uL29 (69 aa).

Belongs to the universal ribosomal protein uL29 family.

The chain is Large ribosomal subunit protein uL29 from Staphylococcus haemolyticus (strain JCSC1435).